The chain runs to 523 residues: Monocarboxylate transporter 7 (523 aa).

Over 1 to 21 (MTQNKLKLCSKANVYTEVPDG) the chain is Cytoplasmic. Residues 22 to 42 (GWGWAVAVSFFFVEVFTYGII) traverse the membrane as a helical segment. The Extracellular segment spans residues 43–62 (KTFGVFFNDLMDSFNESNSR). The helical transmembrane segment at 63–83 (ISWIISICVFVLTFSAPLATV) threads the bilayer. Topologically, residues 84 to 91 (LSNRFGHR) are cytoplasmic. Residues 92 to 112 (LVVMLGGLLVSTGMVAASFSQ) form a helical membrane-spanning segment. Residues 113 to 118 (EVSHMY) are Extracellular-facing. Residues 119–139 (VAIGIISGLGYCFSFLPTVTI) form a helical membrane-spanning segment. The Cytoplasmic portion of the chain corresponds to 140 to 149 (LSQYFGKRRS). The chain crosses the membrane as a helical span at residues 150–170 (IVTAVASTGECFAVFAFAPAI). Topologically, residues 171-184 (MALKERIGWRYSLL) are extracellular. The helical transmembrane segment at 185 to 205 (FVGLLQLNIVIFGALLRPIFI) threads the bilayer. Over 206–299 (RGPASPKIVI…KEKSFICYAL (94 aa)) the chain is Cytoplasmic. Phosphoserine occurs at positions 234, 237, 240, and 247. Residues 300–320 (FGLFATLGFFAPSLYIIPLGI) form a helical membrane-spanning segment. Residues 321–330 (SLGIDQDRAA) are Extracellular-facing. A helical transmembrane segment spans residues 331 to 351 (FLLSTMAIAEVFGRIGAGFVL). Residues 352–358 (NREPIRK) lie on the Cytoplasmic side of the membrane. Residues 359-379 (IYIELICVILLTVSLFAFTFA) traverse the membrane as a helical segment. At 380–381 (TE) the chain is on the extracellular side. Residues 382-402 (FWGLMSCSIFFGFMVGTIGGT) traverse the membrane as a helical segment. Over 403 to 423 (HIPLLAEDDVVGIEKMSSAAG) the chain is Cytoplasmic. A helical membrane pass occupies residues 424 to 444 (VYIFIQSIAGLAGPPLAGLLV). Over 445–452 (DQSKIYSR) the chain is Extracellular. The helical transmembrane segment at 453–473 (AFYSCAAGMALAAVCLALVRP) threads the bilayer. Residues 474 to 523 (CKMGLCQHHHSGETKVVSHRGKTLQDIPEDFLEMDLAKNEHRVHVQMEPV) are Cytoplasmic-facing.

It belongs to the major facilitator superfamily. Monocarboxylate porter (TC 2.A.1.13) family. As to quaternary structure, forms functional complexes with BSG/CD147 or EMB/GP70 ancillary proteins.

The protein localises to the basolateral cell membrane. It catalyses the reaction taurine(out) = taurine(in). Its function is as follows. Monocarboxylate transporter selective for taurine. May associate with BSG/CD147 or EMB/GP70 ancillary proteins to mediate facilitative efflux or influx of taurine across the plasma membrane. The transport is pH- and sodium-independent. Rather low-affinity, is likely effective for taurine transport in tissues where taurine is present at high concentrations. The polypeptide is Monocarboxylate transporter 7 (Homo sapiens (Human)).